Here is a 467-residue protein sequence, read N- to C-terminus: Mitogen-activated protein kinase kinase kinase 8 (467 aa).

Position 80 is a phosphothreonine (Thr-80). Ser-138 and Ser-141 each carry phosphoserine. ATP is bound by residues 144-152 (VPRGAFGKV) and Lys-167. Residues 146–388 (RGAFGKVYLA…AADLLKHEAL (243 aa)) form the Protein kinase domain. The active-site Proton acceptor is Asp-253. Position 290 is a phosphothreonine (Thr-290). Phosphoserine is present on residues Ser-400 and Ser-443.

This sequence belongs to the protein kinase superfamily. STE Ser/Thr protein kinase family. MAP kinase kinase kinase subfamily. As to quaternary structure, forms a ternary complex with NFKB1/p105 and TNIP2. Interacts with NFKB1; the interaction increases the stability of MAP3K8 but inhibits its MEK phosphorylation activity, whereas loss of interaction following LPS stimulation leads to its degradation. Interacts with CD40 and TRAF6; the interaction is required for ERK activation. Interacts with KSR2; the interaction inhibits ERK and NF-kappa-B activation. Mg(2+) serves as cofactor. Autophosphorylated. In terms of tissue distribution, expressed in spleen, thymus, liver and lung.

The protein localises to the cytoplasm. The catalysed reaction is L-seryl-[protein] + ATP = O-phospho-L-seryl-[protein] + ADP + H(+). It carries out the reaction L-threonyl-[protein] + ATP = O-phospho-L-threonyl-[protein] + ADP + H(+). In terms of biological role, required for lipopolysaccharide (LPS)-induced, TLR4-mediated activation of the MAPK/ERK pathway in macrophages, thus being critical for production of the pro-inflammatory cytokine TNF-alpha (TNF) during immune responses. Involved in the regulation of T-helper cell differentiation and IFNG expression in T-cells. Involved in mediating host resistance to bacterial infection through negative regulation of type I interferon (IFN) production. Transduces CD40 and TNFRSF1A signals that activate ERK in B-cells and macrophages, and thus may play a role in the regulation of immunoglobulin production. May also play a role in the transduction of TNF signals that activate JNK and NF-kappa-B in some cell types. In adipocytes, activates MAPK/ERK pathway in an IKBKB-dependent manner in response to IL1B and TNF, but not insulin, leading to induction of lipolysis. Plays a role in the cell cycle. This Rattus norvegicus (Rat) protein is Mitogen-activated protein kinase kinase kinase 8 (Map3k8).